Reading from the N-terminus, the 322-residue chain is DNA repair and recombination protein RadA (322 aa).

Residue glycine 105–threonine 112 coordinates ATP.

Belongs to the eukaryotic RecA-like protein family.

Functionally, involved in DNA repair and in homologous recombination. Binds and assemble on single-stranded DNA to form a nucleoprotein filament. Hydrolyzes ATP in a ssDNA-dependent manner and promotes DNA strand exchange between homologous DNA molecules. The protein is DNA repair and recombination protein RadA of Methanococcus maripaludis (strain C6 / ATCC BAA-1332).